Here is a 68-residue protein sequence, read N- to C-terminus: Small ribosomal subunit protein bS21 (68 aa).

Belongs to the bacterial ribosomal protein bS21 family.

This chain is Small ribosomal subunit protein bS21, found in Cereibacter sphaeroides (strain ATCC 17029 / ATH 2.4.9) (Rhodobacter sphaeroides).